A 271-amino-acid polypeptide reads, in one-letter code: Histone chaperone asf-1 (271 aa).

The interval 152–271 (KWDSEASAPP…PKQQGMAMAQ (120 aa)) is disordered. 2 stretches are compositionally biased toward acidic residues: residues 168 to 185 (PEAD…DELA) and 211 to 258 (IEED…EMEI).

This sequence belongs to the ASF1 family. As to quaternary structure, interacts with histone H3 and histone H4.

The protein localises to the nucleus. In terms of biological role, histone chaperone that facilitates histone deposition and histone exchange and removal during nucleosome assembly and disassembly. The sequence is that of Histone chaperone asf-1 (asf-1) from Neurospora crassa (strain ATCC 24698 / 74-OR23-1A / CBS 708.71 / DSM 1257 / FGSC 987).